The following is a 302-amino-acid chain: Proteasome subunit beta (302 aa).

A propeptide spans 1 to 50 (MTITGSRGFPDGYLAPGSSFLDFAAQHAPTIMPGTQPTFDTIPQDIAPHG) (removed in mature form; by autocatalysis). The active-site Nucleophile is the threonine 51. The tract at residues 277-302 (EPGRDGPGNRLPSQGSATIIPESDQS) is disordered. Residues 287 to 302 (LPSQGSATIIPESDQS) are compositionally biased toward polar residues.

Belongs to the peptidase T1B family. The 20S proteasome core is composed of 14 alpha and 14 beta subunits that assemble into four stacked heptameric rings, resulting in a barrel-shaped structure. The two inner rings, each composed of seven catalytic beta subunits, are sandwiched by two outer rings, each composed of seven alpha subunits. The catalytic chamber with the active sites is on the inside of the barrel. Has a gated structure, the ends of the cylinder being occluded by the N-termini of the alpha-subunits. Is capped by the proteasome-associated ATPase, ARC.

It is found in the cytoplasm. It carries out the reaction Cleavage of peptide bonds with very broad specificity.. The protein operates within protein degradation; proteasomal Pup-dependent pathway. The formation of the proteasomal ATPase ARC-20S proteasome complex, likely via the docking of the C-termini of ARC into the intersubunit pockets in the alpha-rings, may trigger opening of the gate for substrate entry. Interconversion between the open-gate and close-gate conformations leads to a dynamic regulation of the 20S proteasome proteolysis activity. Functionally, component of the proteasome core, a large protease complex with broad specificity involved in protein degradation. The sequence is that of Proteasome subunit beta from Jonesia denitrificans (strain ATCC 14870 / DSM 20603 / BCRC 15368 / CIP 55.134 / JCM 11481 / NBRC 15587 / NCTC 10816 / Prevot 55134) (Listeria denitrificans).